The chain runs to 57 residues: Ribulose bisphosphate carboxylase large chain (57 aa).

Positions 1-2 (MS) are excised as a propeptide. Pro-3 bears the N-acetylproline mark. Lys-14 carries the post-translational modification N6,N6,N6-trimethyllysine.

It belongs to the RuBisCO large chain family. Type I subfamily. Heterohexadecamer of 8 large chains and 8 small chains.

Its subcellular location is the plastid. It localises to the chloroplast. The catalysed reaction is 2 (2R)-3-phosphoglycerate + 2 H(+) = D-ribulose 1,5-bisphosphate + CO2 + H2O. The enzyme catalyses D-ribulose 1,5-bisphosphate + O2 = 2-phosphoglycolate + (2R)-3-phosphoglycerate + 2 H(+). In terms of biological role, ruBisCO catalyzes two reactions: the carboxylation of D-ribulose 1,5-bisphosphate, the primary event in carbon dioxide fixation, as well as the oxidative fragmentation of the pentose substrate in the photorespiration process. Both reactions occur simultaneously and in competition at the same active site. The protein is Ribulose bisphosphate carboxylase large chain (rbcL) of Camellia sinensis (Tea plant).